A 242-amino-acid polypeptide reads, in one-letter code: Probable transcriptional regulatory protein Bphyt_1301 (242 aa).

This sequence belongs to the TACO1 family.

It is found in the cytoplasm. The chain is Probable transcriptional regulatory protein Bphyt_1301 from Paraburkholderia phytofirmans (strain DSM 17436 / LMG 22146 / PsJN) (Burkholderia phytofirmans).